We begin with the raw amino-acid sequence, 196 residues long: Gastrula zinc finger protein XlCGF64.1 (196 aa).

7 consecutive C2H2-type zinc fingers follow at residues 6-28 (YECPECGKTFKYKNSLTIHQRGH), 34-56 (FMCTQCGKCFRQKKALRRHQFIH), 62-84 (YVCTECEKRFLEKSQLILHQRGH), 90-112 (FTCTECGESFRHKQVLMRHQFIH), 118-140 (YECTQCGEGFLLKSKLIHHQRGH), 146-168 (FMCTECGKGFRQKQVLIEHQFIH), and 174-196 (LMCTDCGKHFRQKHVLRLHKLSH).

Belongs to the krueppel C2H2-type zinc-finger protein family.

It localises to the nucleus. Functionally, may be involved in transcriptional regulation. The chain is Gastrula zinc finger protein XlCGF64.1 from Xenopus laevis (African clawed frog).